A 239-amino-acid polypeptide reads, in one-letter code: 2-C-methyl-D-erythritol 4-phosphate cytidylyltransferase (239 aa).

This sequence belongs to the IspD/TarI cytidylyltransferase family. IspD subfamily.

The catalysed reaction is 2-C-methyl-D-erythritol 4-phosphate + CTP + H(+) = 4-CDP-2-C-methyl-D-erythritol + diphosphate. It participates in isoprenoid biosynthesis; isopentenyl diphosphate biosynthesis via DXP pathway; isopentenyl diphosphate from 1-deoxy-D-xylulose 5-phosphate: step 2/6. Catalyzes the formation of 4-diphosphocytidyl-2-C-methyl-D-erythritol from CTP and 2-C-methyl-D-erythritol 4-phosphate (MEP). This chain is 2-C-methyl-D-erythritol 4-phosphate cytidylyltransferase, found in Acinetobacter baylyi (strain ATCC 33305 / BD413 / ADP1).